The sequence spans 178 residues: Large ribosomal subunit protein uL6 (178 aa).

This sequence belongs to the universal ribosomal protein uL6 family. In terms of assembly, part of the 50S ribosomal subunit.

In terms of biological role, this protein binds to the 23S rRNA, and is important in its secondary structure. It is located near the subunit interface in the base of the L7/L12 stalk, and near the tRNA binding site of the peptidyltransferase center. The protein is Large ribosomal subunit protein uL6 of Oenococcus oeni (strain ATCC BAA-331 / PSU-1).